A 120-amino-acid chain; its full sequence is MQEIMLKSKIHMAKVTDKSINYMGSIGIDTELLEKAGMKPYELVLVADVNNGQRFVTYIIPEEKGSKKIVINGAAARLVEQGDRVIIMAFGMYDSNEYKGPKVIIMNEKNEIVEIKQEGV.

Serine 25 functions as the Schiff-base intermediate with substrate; via pyruvic acid in the catalytic mechanism. The residue at position 25 (serine 25) is a Pyruvic acid (Ser). Threonine 57 contributes to the substrate binding site. Tyrosine 58 acts as the Proton donor in catalysis. 73–75 (GAA) contacts substrate.

The protein belongs to the PanD family. In terms of assembly, heterooctamer of four alpha and four beta subunits. Pyruvate is required as a cofactor. In terms of processing, is synthesized initially as an inactive proenzyme, which is activated by self-cleavage at a specific serine bond to produce a beta-subunit with a hydroxyl group at its C-terminus and an alpha-subunit with a pyruvoyl group at its N-terminus.

It localises to the cytoplasm. The catalysed reaction is L-aspartate + H(+) = beta-alanine + CO2. The protein operates within cofactor biosynthesis; (R)-pantothenate biosynthesis; beta-alanine from L-aspartate: step 1/1. In terms of biological role, catalyzes the pyruvoyl-dependent decarboxylation of aspartate to produce beta-alanine. This chain is Aspartate 1-decarboxylase, found in Thermosipho africanus (strain TCF52B).